The following is a 244-amino-acid chain: Uridylate kinase (244 aa).

19-22 (KVSG) lines the ATP pocket. Positions 27 to 32 (GERGFG) are involved in allosteric activation by GTP. Position 61 (Gly61) interacts with UMP. 2 residues coordinate ATP: Gly62 and Arg66. UMP-binding positions include Asp80 and 141-148 (IGSPFFTT). Residues Thr168, Gln169, Tyr174, and Asp177 each contribute to the ATP site.

Belongs to the UMP kinase family. In terms of assembly, homohexamer.

It localises to the cytoplasm. It carries out the reaction UMP + ATP = UDP + ADP. The protein operates within pyrimidine metabolism; CTP biosynthesis via de novo pathway; UDP from UMP (UMPK route): step 1/1. Allosterically activated by GTP. Inhibited by UTP. Its function is as follows. Catalyzes the reversible phosphorylation of UMP to UDP. The polypeptide is Uridylate kinase (Anaplasma phagocytophilum (strain HZ)).